Consider the following 298-residue polypeptide: Homoserine kinase (298 aa).

83–93 (PISRGLGSSSS) contacts ATP.

It belongs to the GHMP kinase family. Homoserine kinase subfamily.

The protein localises to the cytoplasm. It carries out the reaction L-homoserine + ATP = O-phospho-L-homoserine + ADP + H(+). It functions in the pathway amino-acid biosynthesis; L-threonine biosynthesis; L-threonine from L-aspartate: step 4/5. Catalyzes the ATP-dependent phosphorylation of L-homoserine to L-homoserine phosphate. The protein is Homoserine kinase of Clostridium botulinum (strain Alaska E43 / Type E3).